The sequence spans 339 residues: RNA polymerase principal sigma factor HrdC (339 aa).

The span at 1 to 10 (MAPTARTPTA) shows a compositional bias: low complexity. Disordered stretches follow at residues 1–37 (MAPT…EEPD) and 71–101 (REEL…DGQE). Residues 91 to 101 (TLEETVHDGQE) are compositionally biased toward basic and acidic residues. Positions 130–143 (DVIQEGNLGLIRAV) match the Polymerase core binding motif. Residues 300–319 (LQQVAQHVGLTRERVRQLEK) constitute a DNA-binding region (H-T-H motif).

It belongs to the sigma-70 factor family. As to quaternary structure, interacts transiently with the RNA polymerase catalytic core.

Sigma factors are initiation factors that promote the attachment of RNA polymerase to specific initiation sites and are then released. The protein is RNA polymerase principal sigma factor HrdC (hrdC) of Streptomyces coelicolor (strain ATCC BAA-471 / A3(2) / M145).